The sequence spans 178 residues: ATP synthase subunit delta (178 aa).

Belongs to the ATPase delta chain family. As to quaternary structure, F-type ATPases have 2 components, F(1) - the catalytic core - and F(0) - the membrane proton channel. F(1) has five subunits: alpha(3), beta(3), gamma(1), delta(1), epsilon(1). F(0) has three main subunits: a(1), b(2) and c(10-14). The alpha and beta chains form an alternating ring which encloses part of the gamma chain. F(1) is attached to F(0) by a central stalk formed by the gamma and epsilon chains, while a peripheral stalk is formed by the delta and b chains.

The protein localises to the cell inner membrane. In terms of biological role, f(1)F(0) ATP synthase produces ATP from ADP in the presence of a proton or sodium gradient. F-type ATPases consist of two structural domains, F(1) containing the extramembraneous catalytic core and F(0) containing the membrane proton channel, linked together by a central stalk and a peripheral stalk. During catalysis, ATP synthesis in the catalytic domain of F(1) is coupled via a rotary mechanism of the central stalk subunits to proton translocation. Functionally, this protein is part of the stalk that links CF(0) to CF(1). It either transmits conformational changes from CF(0) to CF(1) or is implicated in proton conduction. This is ATP synthase subunit delta from Pseudomonas fluorescens (strain ATCC BAA-477 / NRRL B-23932 / Pf-5).